The primary structure comprises 342 residues: Pre-mRNA-splicing factor 18 (342 aa).

At Met1 the chain carries N-acetylmethionine.

This sequence belongs to the PRP18 family. Heterodimer with PPIH. Interacts with PRPF4 and with the spliceosome. Part of a complex containing U4/U6 snRNPs. Also detected in the cytoplasm. In terms of tissue distribution, detected in brain, heart, liver and skeletal muscle.

The protein localises to the nucleus speckle. Participates in the second step of pre-mRNA splicing. Down-regulates the expression of potassium channel subunits. This chain is Pre-mRNA-splicing factor 18 (Prpf18), found in Rattus norvegicus (Rat).